Here is a 130-residue protein sequence, read N- to C-terminus: Small ribosomal subunit protein uS11c (130 aa).

This sequence belongs to the universal ribosomal protein uS11 family. Part of the 30S ribosomal subunit.

Its subcellular location is the plastid. The protein resides in the chloroplast. The sequence is that of Small ribosomal subunit protein uS11c from Psilotum nudum (Whisk fern).